The sequence spans 396 residues: Acetate kinase (396 aa).

Asn7 is a binding site for Mg(2+). An ATP-binding site is contributed by Lys14. Arg88 contributes to the substrate binding site. The active-site Proton donor/acceptor is the Asp145. ATP contacts are provided by residues 205 to 209, 279 to 281, and 327 to 331; these read HLGNG, DFR, and GIGEN. A Mg(2+)-binding site is contributed by Glu381.

This sequence belongs to the acetokinase family. As to quaternary structure, homodimer. Requires Mg(2+) as cofactor. It depends on Mn(2+) as a cofactor.

It is found in the cytoplasm. It catalyses the reaction acetate + ATP = acetyl phosphate + ADP. It functions in the pathway metabolic intermediate biosynthesis; acetyl-CoA biosynthesis; acetyl-CoA from acetate: step 1/2. In terms of biological role, catalyzes the formation of acetyl phosphate from acetate and ATP. Can also catalyze the reverse reaction. The chain is Acetate kinase from Campylobacter jejuni subsp. jejuni serotype O:23/36 (strain 81-176).